Consider the following 406-residue polypeptide: Aminomethyltransferase, mitochondrial (406 aa).

The transit peptide at 1–29 (MRGGLWQLGQSITRRLAQADKKTIGRRCF) directs the protein to the mitochondrion. The substrate site is built by glutamate 234, arginine 265, and tyrosine 403.

Belongs to the GcvT family. In terms of assembly, the glycine cleavage system is composed of four proteins: P, T, L and H.

It localises to the mitochondrion. The catalysed reaction is N(6)-[(R)-S(8)-aminomethyldihydrolipoyl]-L-lysyl-[protein] + (6S)-5,6,7,8-tetrahydrofolate = N(6)-[(R)-dihydrolipoyl]-L-lysyl-[protein] + (6R)-5,10-methylene-5,6,7,8-tetrahydrofolate + NH4(+). Its function is as follows. The glycine cleavage system catalyzes the degradation of glycine. This Solanum tuberosum (Potato) protein is Aminomethyltransferase, mitochondrial (GDCST).